Consider the following 215-residue polypeptide: 3-demethoxyubiquinol 3-hydroxylase (215 aa).

6 residues coordinate Fe cation: glutamate 64, glutamate 94, histidine 97, glutamate 146, glutamate 178, and histidine 181.

The protein belongs to the COQ7 family. Fe cation serves as cofactor.

The protein localises to the cell membrane. The enzyme catalyses a 5-methoxy-2-methyl-3-(all-trans-polyprenyl)benzene-1,4-diol + AH2 + O2 = a 3-demethylubiquinol + A + H2O. The protein operates within cofactor biosynthesis; ubiquinone biosynthesis. Its function is as follows. Catalyzes the hydroxylation of 2-nonaprenyl-3-methyl-6-methoxy-1,4-benzoquinol during ubiquinone biosynthesis. In Pseudomonas putida (strain GB-1), this protein is 3-demethoxyubiquinol 3-hydroxylase.